The chain runs to 48 residues: Cytochrome b559 subunit beta (48 aa).

The chain crosses the membrane as a helical span at residues 23 to 39 (WLAVHALAIPTVFFLGA). His27 provides a ligand contact to heme.

Belongs to the PsbE/PsbF family. In terms of assembly, heterodimer of an alpha subunit and a beta subunit. PSII is composed of 1 copy each of membrane proteins PsbA, PsbB, PsbC, PsbD, PsbE, PsbF, PsbH, PsbI, PsbJ, PsbK, PsbL, PsbM, PsbT, PsbX, PsbY, Psb30/Ycf12, peripheral proteins PsbO, CyanoQ (PsbQ), PsbU, PsbV and a large number of cofactors. It forms dimeric complexes. It depends on heme b as a cofactor.

It localises to the cellular thylakoid membrane. Its function is as follows. This b-type cytochrome is tightly associated with the reaction center of photosystem II (PSII). PSII is a light-driven water:plastoquinone oxidoreductase that uses light energy to abstract electrons from H(2)O, generating O(2) and a proton gradient subsequently used for ATP formation. It consists of a core antenna complex that captures photons, and an electron transfer chain that converts photonic excitation into a charge separation. The protein is Cytochrome b559 subunit beta of Prochlorococcus marinus (strain SARG / CCMP1375 / SS120).